The chain runs to 139 residues: MSSLPVPYKLPVSLSVGSCVIIKGTPIHSFINDPQLQVDFYTDMDEDSDIAFRFRVHFGNHVVMNRREFGIWMLEETTDYVPFEDGKQFELCIYVHYNEYEIKVNGIRIYGFVHRIPPSFVKMVQVSRDISLTSVCVCN.

The 133-residue stretch at 6-138 (VPYKLPVSLS…DISLTSVCVC (133 aa)) folds into the Galectin domain.

In terms of assembly, homodimer; disulfide-linked. As to expression, detected in adult and fetal spleen, fetal kidney, adult urinary bladder and placenta. Placental expression originates predominantly from the syncytiotrophoblast.

It is found in the cytoplasm. The protein localises to the nucleus matrix. Functionally, binds beta-galactoside and lactose. Strong inducer of T-cell apoptosis. Has hemagglutinating activity towards chicken erythrocytes. The protein is Galactoside-binding soluble lectin 13 (LGALS13) of Homo sapiens (Human).